Consider the following 148-residue polypeptide: NPC intracellular cholesterol transporter 2 homolog a (148 aa).

The N-terminal stretch at 1–16 is a signal peptide; that stretch reads MLRYAVIACAALVVFA. 3 disulfides stabilise this stretch: C24/C140, C39/C46, and C92/C99. N51 carries an N-linked (GlcNAc...) asparagine glycan.

This sequence belongs to the NPC2 family. As to expression, broadly expressed with a higher level of expression in many tissues, including midgut, salivary gland and ventral nerve cord.

It localises to the secreted. Functionally, functions redundantly with Npc2b in regulating sterol homeostasis and ecdysteroid biosynthesis, probably by controlling the availability of sterol substrate. The chain is NPC intracellular cholesterol transporter 2 homolog a from Drosophila melanogaster (Fruit fly).